The primary structure comprises 230 residues: MMLKTVLRLPVCAALLALAAGCAMIPPEPVVTGPLTAPPPPPPQPSARPNGSIYQPSAYGNYPLFEDRRPRNVGDIVTIVLEEKTNAAKGVATNTSRDGSATLGVAAAPRFMDGVINDKLDTDISGGNTANGTGKSSANNTFTGTITTTVIGVLPNGNLQIAGEKQIAINRGSEYVRFSGVVDPRSITGSNTVSSTRVADARIEYRSKGVMDEVQTMGWLQRFFLIASPF.

An N-terminal signal peptide occupies residues 1 to 21 (MMLKTVLRLPVCAALLALAAG). C22 is lipidated: N-palmitoyl cysteine. C22 is lipidated: S-diacylglycerol cysteine. The tract at residues 34 to 53 (PLTAPPPPPPQPSARPNGSI) is disordered. The span at 36 to 46 (TAPPPPPPQPS) shows a compositional bias: pro residues.

This sequence belongs to the FlgH family. The basal body constitutes a major portion of the flagellar organelle and consists of four rings (L,P,S, and M) mounted on a central rod.

It localises to the cell outer membrane. It is found in the bacterial flagellum basal body. Its function is as follows. Assembles around the rod to form the L-ring and probably protects the motor/basal body from shearing forces during rotation. The chain is Flagellar L-ring protein from Bordetella parapertussis (strain 12822 / ATCC BAA-587 / NCTC 13253).